A 214-amino-acid polypeptide reads, in one-letter code: Cell division protein DamX (214 aa).

2 stretches are compositionally biased toward polar residues: residues 1-14 and 43-53; these read GSGT…QPQQ and QGMTGAASTLP. A disordered region spans residues 1 to 133; the sequence is GSGTPTEAQT…SVQSAPGSHY (133 aa). The helical transmembrane segment at 44–65 threads the bilayer; sequence GMTGAASTLPTAPATVMSGAAA. 2 stretches are compositionally biased toward low complexity: residues 78–97 and 110–131; these read QQHK…TQHK and SSTA…APGS. An SPOR domain is found at 127 to 204; it reads SAPGSHYTLQ…VQAKKPWVRP (78 aa).

This sequence belongs to the DamX family.

The protein localises to the cell inner membrane. In terms of biological role, non-essential cell division protein. The sequence is that of Cell division protein DamX from Serratia marcescens.